A 155-amino-acid polypeptide reads, in one-letter code: SsrA-binding protein (155 aa).

It belongs to the SmpB family.

The protein localises to the cytoplasm. Its function is as follows. Required for rescue of stalled ribosomes mediated by trans-translation. Binds to transfer-messenger RNA (tmRNA), required for stable association of tmRNA with ribosomes. tmRNA and SmpB together mimic tRNA shape, replacing the anticodon stem-loop with SmpB. tmRNA is encoded by the ssrA gene; the 2 termini fold to resemble tRNA(Ala) and it encodes a 'tag peptide', a short internal open reading frame. During trans-translation Ala-aminoacylated tmRNA acts like a tRNA, entering the A-site of stalled ribosomes, displacing the stalled mRNA. The ribosome then switches to translate the ORF on the tmRNA; the nascent peptide is terminated with the 'tag peptide' encoded by the tmRNA and targeted for degradation. The ribosome is freed to recommence translation, which seems to be the essential function of trans-translation. This chain is SsrA-binding protein, found in Halothermothrix orenii (strain H 168 / OCM 544 / DSM 9562).